The chain runs to 199 residues: Recombination protein RecR (199 aa).

Residues 57–72 (CSICGNITESDPCMIC) form a C4-type zinc finger. Residues 80-176 (SKVVVVEQPK…KVTRLAHGLA (97 aa)) form the Toprim domain.

It belongs to the RecR family.

In terms of biological role, may play a role in DNA repair. It seems to be involved in an RecBC-independent recombinational process of DNA repair. It may act with RecF and RecO. The chain is Recombination protein RecR from Ligilactobacillus salivarius (strain UCC118) (Lactobacillus salivarius).